The following is an 836-amino-acid chain: Protein-glutamine gamma-glutamyltransferase K (836 aa).

The segment covering 1 to 33 (MDGPRSDMGRSDVSRSDMSRSDMGRSDMGRSDV) has biased composition (basic and acidic residues). 2 disordered regions span residues 1-68 (MDGP…SRGG) and 89-125 (DDWGREPSDSRDRGSSSRGGRPDSRGGGVNAAGDGTI). Thr-46 carries the post-translational modification Phosphothreonine. Residues Ser-48, Ser-98, and Ser-112 each carry the phosphoserine modification. Basic and acidic residues predominate over residues 89 to 112 (DDWGREPSDSRDRGSSSRGGRPDS). Catalysis depends on residues Cys-397, His-456, and Asp-479. Asn-519, Asp-521, Glu-568, and Glu-573 together coordinate Ca(2+). Ser-824 bears the Phosphoserine mark.

It belongs to the transglutaminase superfamily. Transglutaminase family. Interacts with PLAAT4. The cofactor is Ca(2+). Post-translationally, palmitoylated. The membrane anchorage region possesses a cluster of five cysteines within which fatty acid(s) may become thioester-linked. It is subject to phorbol ester-stimulated phosphorylation and is hypersensitive to proteolysis, which releases the enzyme in a soluble form. In terms of processing, tyrosine-phosphorylated.

The protein localises to the membrane. The enzyme catalyses L-glutaminyl-[protein] + L-lysyl-[protein] = [protein]-L-lysyl-N(6)-5-L-glutamyl-[protein] + NH4(+). Inhibited by retinoic acid, but phorbol ester treatment activates it. Its function is as follows. Catalyzes the cross-linking of proteins and the conjugation of polyamines to proteins. Responsible for cross-linking epidermal proteins during formation of the stratum corneum. Involved in cell proliferation. This is Protein-glutamine gamma-glutamyltransferase K (TGM1) from Oryctolagus cuniculus (Rabbit).